We begin with the raw amino-acid sequence, 84 residues long: Small ribosomal subunit protein bS18B (84 aa).

It belongs to the bacterial ribosomal protein bS18 family. As to quaternary structure, part of the 30S ribosomal subunit. Forms a tight heterodimer with protein bS6.

In terms of biological role, binds as a heterodimer with protein bS6 to the central domain of the 16S rRNA, where it helps stabilize the platform of the 30S subunit. The polypeptide is Small ribosomal subunit protein bS18B (Mycolicibacterium smegmatis (strain ATCC 700084 / mc(2)155) (Mycobacterium smegmatis)).